The following is an 81-amino-acid chain: Sulfur carrier protein TusA (81 aa).

Cys-19 functions as the Cysteine persulfide intermediate in the catalytic mechanism.

The protein belongs to the sulfur carrier protein TusA family.

The protein localises to the cytoplasm. Sulfur carrier protein which probably makes part of a sulfur-relay system. The polypeptide is Sulfur carrier protein TusA (Shewanella baltica (strain OS223)).